The chain runs to 112 residues: ATP synthase epsilon chain (112 aa).

This sequence belongs to the ATPase epsilon chain family. F-type ATPases have 2 components, CF(1) - the catalytic core - and CF(0) - the membrane proton channel. CF(1) has five subunits: alpha(3), beta(3), gamma(1), delta(1), epsilon(1). CF(0) has three main subunits: a, b and c.

The protein resides in the cell inner membrane. Its function is as follows. Produces ATP from ADP in the presence of a proton gradient across the membrane. The polypeptide is ATP synthase epsilon chain (atpC) (Rickettsia conorii (strain ATCC VR-613 / Malish 7)).